A 418-amino-acid chain; its full sequence is UDP-N-acetylglucosamine 1-carboxyvinyltransferase (418 aa).

22-23 (KN) lines the phosphoenolpyruvate pocket. Residue arginine 92 coordinates UDP-N-acetyl-alpha-D-glucosamine. Cysteine 116 serves as the catalytic Proton donor. Cysteine 116 is subject to 2-(S-cysteinyl)pyruvic acid O-phosphothioketal. Residues 121 to 125 (RPIDL), aspartate 305, and leucine 327 contribute to the UDP-N-acetyl-alpha-D-glucosamine site.

It belongs to the EPSP synthase family. MurA subfamily.

It localises to the cytoplasm. It catalyses the reaction phosphoenolpyruvate + UDP-N-acetyl-alpha-D-glucosamine = UDP-N-acetyl-3-O-(1-carboxyvinyl)-alpha-D-glucosamine + phosphate. Its pathway is cell wall biogenesis; peptidoglycan biosynthesis. Cell wall formation. Adds enolpyruvyl to UDP-N-acetylglucosamine. The chain is UDP-N-acetylglucosamine 1-carboxyvinyltransferase from Campylobacter jejuni subsp. doylei (strain ATCC BAA-1458 / RM4099 / 269.97).